Here is a 434-residue protein sequence, read N- to C-terminus: Putative magnesium transporter MRS2-D (434 aa).

Disordered stretches follow at residues 126-171 (AASP…DGEA) and 279-311 (EASELEDHSSRDEEGVEGGGGGDGDDETIAGGG). The span at 279–291 (EASELEDHSSRDE) shows a compositional bias: basic and acidic residues. 2 consecutive transmembrane segments (helical) span residues 367 to 387 (GILLSTGTLVSSCAIAVTGVF) and 405 to 425 (FPCAAAGIVAGSLALYLAALL).

This sequence belongs to the CorA metal ion transporter (MIT) (TC 1.A.35.5) family.

Its subcellular location is the membrane. In terms of biological role, putative magnesium transporter. This is Putative magnesium transporter MRS2-D (MRS2-D) from Oryza sativa subsp. japonica (Rice).